The primary structure comprises 370 residues: MESNSSQCEDETPSLLWGLDPVFLAFAKLYIRDILDLKESGQVQGVFFYNGHPIKQVDILGTVIGVREKDAFYSYGVDDSTGVINCICWKRLNNTKSSSATATPSARELSLTSQLKKLQETIAQRAKLEIGDIIRVRGHIRMFRGEREIHATTYYKVDDPVCNVQIARMLELPAIYRKVYDQPFHSPALKEDEALSNPGTLDLDSLTCLLSEKAKEFLVENRVQSFYQQELETVESLLSLANQPVIHSACSGQMGFKNDTTSRAIHSIFRNAVKLLQEEGLVFQKDGGFDNLFYVTREDKELHRKIHRIIQEECQKPNHVEKGCHFLHILACARLSLSPGLSEPVLQQVLQLLEDQSDIVSTTEKYYTAF.

Positions 1 to 187 are interaction with CTC1; it reads MESNSSQCED…KVYDQPFHSP (187 aa). The OB DNA-binding region spans 57–157; sequence VDILGTVIGV…EIHATTYYKV (101 aa). 2 winged helix-turn-helix (wHTH) regions span residues 193 to 297 and 298 to 370; these read EALS…YVTR and EDKE…YTAF.

Belongs to the STN1 family. As to quaternary structure, component of the CST complex, composed of TEN1/C17orf106, CTC1/C17orf68 and STN1; in the complex interacts directly with TEN1 and CTC1. Interacts with ACD/TPP1, POT1 and POLA1.

The protein resides in the nucleus. It localises to the chromosome. The protein localises to the telomere. In terms of biological role, component of the CST complex proposed to act as a specialized replication factor promoting DNA replication under conditions of replication stress or natural replication barriers such as the telomere duplex. The CST complex binds single-stranded DNA with high affinity in a sequence-independent manner, while isolated subunits bind DNA with low affinity by themselves. Initially the CST complex has been proposed to protect telomeres from DNA degradation. However, the CST complex has been shown to be involved in several aspects of telomere replication. The CST complex inhibits telomerase and is involved in telomere length homeostasis; it is proposed to bind to newly telomerase-synthesized 3' overhangs and to terminate telomerase action implicating the association with the ACD:POT1 complex thus interfering with its telomerase stimulation activity. The CST complex is also proposed to be involved in fill-in synthesis of the telomeric C-strand probably implicating recruitment and activation of DNA polymerase alpha. The CST complex facilitates recovery from many forms of exogenous DNA damage; seems to be involved in the re-initiation of DNA replication at repaired forks and/or dormant origins. Required for efficicient replication of the duplex region of the telomere. Promotes efficient replication of lagging-strand telomeres. Promotes general replication start following replication-fork stalling implicating new origin firing. May be in involved in C-strand fill-in during late S/G2 phase independent of its role in telomere duplex replication. In Bos taurus (Bovine), this protein is CST complex subunit STN1.